The chain runs to 141 residues: Small ribosomal subunit protein bS6 (141 aa).

Residues 110-141 (SRTKVSDQPAAVEAAEAPAAPAAQEESAPASA) form a disordered region. Residues 117–141 (QPAAVEAAEAPAAPAAQEESAPASA) are compositionally biased toward low complexity.

It belongs to the bacterial ribosomal protein bS6 family.

Binds together with bS18 to 16S ribosomal RNA. In Acidobacterium capsulatum (strain ATCC 51196 / DSM 11244 / BCRC 80197 / JCM 7670 / NBRC 15755 / NCIMB 13165 / 161), this protein is Small ribosomal subunit protein bS6.